The chain runs to 239 residues: Orotidine 5'-phosphate decarboxylase (239 aa).

Substrate contacts are provided by residues Asp-10, Lys-32, 59–68, Thr-122, Arg-184, Gln-193, Gly-213, and Arg-214; that span reads DLKLHDIPNT. The active-site Proton donor is Lys-61.

The protein belongs to the OMP decarboxylase family. Type 1 subfamily. In terms of assembly, homodimer.

The enzyme catalyses orotidine 5'-phosphate + H(+) = UMP + CO2. It functions in the pathway pyrimidine metabolism; UMP biosynthesis via de novo pathway; UMP from orotate: step 2/2. Its function is as follows. Catalyzes the decarboxylation of orotidine 5'-monophosphate (OMP) to uridine 5'-monophosphate (UMP). The sequence is that of Orotidine 5'-phosphate decarboxylase from Geobacillus sp. (strain WCH70).